The primary structure comprises 110 residues: Thiosulfate sulfurtransferase GlpE (110 aa).

Positions 17–105 (RENGAQVVDI…WRSVYPADTS (89 aa)) constitute a Rhodanese domain. The active-site Cysteine persulfide intermediate is cysteine 65.

Belongs to the GlpE family.

It localises to the cytoplasm. The catalysed reaction is thiosulfate + hydrogen cyanide = thiocyanate + sulfite + 2 H(+). It carries out the reaction thiosulfate + [thioredoxin]-dithiol = [thioredoxin]-disulfide + hydrogen sulfide + sulfite + 2 H(+). Functionally, transferase that catalyzes the transfer of sulfur from thiosulfate to thiophilic acceptors such as cyanide or dithiols. May function in a CysM-independent thiosulfate assimilation pathway by catalyzing the conversion of thiosulfate to sulfite, which can then be used for L-cysteine biosynthesis. The sequence is that of Thiosulfate sulfurtransferase GlpE from Pseudomonas aeruginosa (strain ATCC 15692 / DSM 22644 / CIP 104116 / JCM 14847 / LMG 12228 / 1C / PRS 101 / PAO1).